The following is a 316-amino-acid chain: Bifunctional riboflavin kinase/FMN adenylyltransferase (316 aa).

This sequence belongs to the RibF family.

The enzyme catalyses riboflavin + ATP = FMN + ADP + H(+). It carries out the reaction FMN + ATP + H(+) = FAD + diphosphate. It participates in cofactor biosynthesis; FAD biosynthesis; FAD from FMN: step 1/1. The protein operates within cofactor biosynthesis; FMN biosynthesis; FMN from riboflavin (ATP route): step 1/1. In terms of biological role, catalyzes the phosphorylation of riboflavin to FMN followed by the adenylation of FMN to FAD. The chain is Bifunctional riboflavin kinase/FMN adenylyltransferase (ribC) from Bacillus subtilis (strain 168).